We begin with the raw amino-acid sequence, 333 residues long: Transcription factor HHO6 (333 aa).

In terms of domain architecture, HTH myb-type spans 189-249 (ALRKQRRCWN…HLQKYRLHIR (61 aa)). The H-T-H motif DNA-binding region spans 220–245 (PKQIREHMQEEGLTNDEVKSHLQKYR). The disordered stretch occupies residues 274–333 (DEEETCEGGESLKRSNAQSDSPQGPLQLPSTTTTTGGDSSMEDVEDAKSESFQLERLRSP). Over residues 287 to 303 (RSNAQSDSPQGPLQLPS) the composition is skewed to polar residues. A compositionally biased stretch (basic and acidic residues) spans 319–333 (DAKSESFQLERLRSP).

The protein localises to the nucleus. Its function is as follows. Probable transcription factor involved in phosphate signaling in roots. The chain is Transcription factor HHO6 from Arabidopsis thaliana (Mouse-ear cress).